A 120-amino-acid polypeptide reads, in one-letter code: NAD(P)H-quinone oxidoreductase subunit 3, chloroplastic (120 aa).

3 consecutive transmembrane segments (helical) span residues 10–30, 64–84, and 89–109; these read FWLFLLIASLIPVSAFSISKI, MFALVFVIFDVETVFLYPWAM, and LGISAFIEALIFVLILIIGLI.

This sequence belongs to the complex I subunit 3 family. In terms of assembly, NDH is composed of at least 16 different subunits, 5 of which are encoded in the nucleus.

It is found in the plastid. The protein resides in the chloroplast thylakoid membrane. It catalyses the reaction a plastoquinone + NADH + (n+1) H(+)(in) = a plastoquinol + NAD(+) + n H(+)(out). It carries out the reaction a plastoquinone + NADPH + (n+1) H(+)(in) = a plastoquinol + NADP(+) + n H(+)(out). Functionally, NDH shuttles electrons from NAD(P)H:plastoquinone, via FMN and iron-sulfur (Fe-S) centers, to quinones in the photosynthetic chain and possibly in a chloroplast respiratory chain. The immediate electron acceptor for the enzyme in this species is believed to be plastoquinone. Couples the redox reaction to proton translocation, and thus conserves the redox energy in a proton gradient. The sequence is that of NAD(P)H-quinone oxidoreductase subunit 3, chloroplastic from Angiopteris evecta (Mule's foot fern).